Consider the following 513-residue polypeptide: Homeobox and leucine zipper protein Homez (513 aa).

Residues 31-90 constitute a DNA-binding region (homeobox 1); the sequence is WTQAVQTSELDGNEHLLQAFSYFPYPSLADIALLCLRHGLQMEKVKTWFMAQRLRCGISW. Residues lysine 156, lysine 174, and lysine 176 each participate in a glycyl lysine isopeptide (Lys-Gly) (interchain with G-Cter in SUMO2) cross-link. 5 disordered regions span residues 200–221, 241–287, 303–328, 402–429, and 480–513; these read LSKE…ASWN, SCKE…SFSP, RLRN…HQRK, PAIS…PPPD, and LDEE…IIRD. Gly residues predominate over residues 205-217; sequence AGGGPDQSCGGGT. Positions 248 to 260 are enriched in low complexity; that stretch reads PSGTPPSSSASSP. Serine 320 carries the post-translational modification Phosphoserine. 2 DNA-binding regions (homeobox) span residues 324 to 384 and 418 to 477; these read QHQR…KHGQ and TPPL…AEVV. A Nuclear localization signal motif is present at residues 327-332; the sequence is RKTKRK. Threonine 418 carries the post-translational modification Phosphothreonine. Pro residues predominate over residues 419–429; sequence PPLPAPPPPPD.

In terms of assembly, homodimer or heterodimer (Potential). Interacts with HOXC8.

The protein localises to the nucleus. In terms of biological role, may function as a transcriptional regulator. The polypeptide is Homeobox and leucine zipper protein Homez (Homez) (Rattus norvegicus (Rat)).